Reading from the N-terminus, the 232-residue chain is Sensory rhodopsin III (232 aa).

The next 7 membrane-spanning stretches (helical) occupy residues 5–25 (IVWY…FVWF), 39–59 (LPPI…LIAG), 73–93 (FADW…LAGV), 100–120 (LAVA…SMSG), 125–145 (IAFA…IKTF), 168–188 (VVTW…TGII), and 194–214 (NFLV…ILLV). Lysine 205 carries the post-translational modification N6-(retinylidene)lysine.

Belongs to the archaeal/bacterial/fungal opsin family. Interacts with HtrM. Post-translationally, the covalent binding of retinal to the apoprotein, bacterioopsin, generates bacteriorhodopsin.

Its subcellular location is the membrane. Its function is as follows. Sensory rhodopsin. Associates with an unusual transducer lacking a methyl-accepting transducer domain found in all other photosensory transducers. The chromophore is all-trans-retinal in the dark. The protein is Sensory rhodopsin III (xop2) of Haloarcula marismortui (strain ATCC 43049 / DSM 3752 / JCM 8966 / VKM B-1809) (Halobacterium marismortui).